Consider the following 2441-residue polypeptide: Histone lysine acetyltransferase CREBBP (2441 aa).

Disordered stretches follow at residues 1–29 (MAEN…DNTD) and 73–168 (LRGG…PATS). A2 is subject to N-acetylalanine. Polar residues predominate over residues 20-29 (PGFSANDNTD). A compositionally biased stretch (low complexity) spans 79–89 (SSINPGIGNVS). S120 bears the Phosphoserine mark. Polar residues predominate over residues 121-168 (PLNQGDSSTPNLPKQAASTSGPTPPASQALNPQAQKQVGLVTSSPATS). At R219 the chain carries Omega-N-methylarginine. Positions 226–409 (PAPAMQGATS…GKACQVAHCA (184 aa)) are interaction with SRCAP. The segment covering 261 to 272 (GGMTKMGMTGTT) has biased composition (low complexity). The disordered stretch occupies residues 261-292 (GGMTKMGMTGTTSPFGQPFSQTGGQQMGATGV). A compositionally biased stretch (polar residues) spans 273 to 292 (SPFGQPFSQTGGQQMGATGV). The segment at 346–432 (DPEKRKLIQQ…RHDCPVCLPL (87 aa)) adopts a TAZ-type 1 zinc-finger fold. 12 residues coordinate Zn(2+): H362, C366, C379, C384, H393, C397, C403, C408, H417, C421, C426, and C429. In terms of domain architecture, KIX spans 586 to 665 (GVRKGWHEHV…KIYKIQKELE (80 aa)). Asymmetric dimethylarginine occurs at positions 600 and 624. K656 carries the post-translational modification N6-acetyllysine. Over residues 792–811 (FLPQNQFPSSSGAMSVNSVG) the composition is skewed to polar residues. A disordered region spans residues 792–1088 (FLPQNQFPSS…SQPRKKIFKP (297 aa)). Residues 846-862 (PCPPVTQSPLHPTPPPA) show a composition bias toward pro residues. The span at 894 to 906 (VSSGQTPTPTPGS) shows a compositional bias: polar residues. 2 stretches are compositionally biased toward low complexity: residues 909–930 (SAAQ…VTPQ) and 938–957 (PSVA…HTQP). The segment covering 974 to 989 (PTPSSVTSAETSSQQP) has biased composition (polar residues). K999 participates in a covalent cross-link: Glycyl lysine isopeptide (Lys-Gly) (interchain with G-Cter in SUMO1). A compositionally biased stretch (basic and acidic residues) spans 1012-1022 (TESKGEPRSEM). K1015 is subject to N6-acetyllysine. Position 1031 is a phosphoserine (S1031). A compositionally biased stretch (basic and acidic residues) spans 1033–1060 (VKEETDTTEQKSEPMEVEEKKPEVKVEA). Residues K1034 and K1057 each participate in a glycyl lysine isopeptide (Lys-Gly) (interchain with G-Cter in SUMO1) cross-link. Polar residues predominate over residues 1068–1080 (SNDTASQSTSPSQ). S1077 bears the Phosphoserine mark. The Bromo domain occupies 1086–1193 (FKPEELRQAL…EVFEQEIDPV (108 aa)). The interaction with histone stretch occupies residues 1125 to 1171 (DYFDIVKNPMDLSTIKRKLDTGQYQEPWQYVDDVWLMFNNAWLYNRK). The interaction with ASF1A stretch occupies residues 1163-1181 (NNAWLYNRKTSRVYKFCSK). K1217 is modified (N6-acetyllysine). Residues 1324–1701 (KFSAKRLQTT…MLVELHTQGQ (378 aa)) enclose the CBP/p300-type HAT domain. Phosphoserine; by IKKA is present on residues S1383 and S1387. The interval 1434-1436 (YLD) is interaction with histone. Residues 1435 to 1437 (LDS), 1447 to 1448 (RT), I1494, R1499, and W1503 contribute to the acetyl-CoA site. The segment covering 1557 to 1569 (LEQEEEERKKEES) has biased composition (basic and acidic residues). Positions 1557–1616 (LEQEEEERKKEESTAASETPEGSQGDSKNAKKKNNKKTNKNKSSISRANKKKPSMPNVSN) are disordered. N6-acetyllysine occurs at positions 1584, 1592, 1593, 1596, and 1598. Basic residues predominate over residues 1586 to 1596 (AKKKNNKKTNK). Residues 1703 to 1751 (RFVYTCNECKHHVETRWHCTVCEDYDLCINCYNTKSHTHKMVKWGLGLD) form a ZZ-type zinc finger. Residues C1708, C1711, C1721, C1724, C1730, C1733, H1739, and H1741 each coordinate Zn(2+). N6-acetyllysine occurs at positions 1742 and 1745. A Phosphoserine modification is found at S1764. The TAZ-type 2 zinc finger occupies 1766 to 1847 (QESRRLSIQR…KCPVPFCLNI (82 aa)). A disordered region spans residues 1875-1959 (TRNVPQQSLP…AQPPPAAVEA (85 aa)). Composition is skewed to pro residues over residues 1901–1913 (PQTP…PQPS) and 1944–1955 (PAPPPPAQPPPA). Residues S2064, S2077, and S2080 each carry the phosphoserine modification. Positions 2112–2421 (NQPGMQPQPG…NTPNRSALSS (310 aa)) are disordered. The span at 2113–2138 (QPGMQPQPGLQSQPGMQPQPGMHQQP) shows a compositional bias: low complexity. Over residues 2167–2188 (PQGQALNIMNPGHNPNMTNMNP) the composition is skewed to polar residues. Low complexity-rich tracts occupy residues 2197-2216 (QLLQ…QQQQ), 2260-2279 (MGQM…PGLG), and 2286-2304 (IQQA…KQQI). Composition is skewed to polar residues over residues 2314 to 2326 (SPQQ…QPQA) and 2333 to 2342 (QIATSLSNQV). The span at 2348–2371 (VQSPRPQSQPPHSSPSPRIQPQPS) shows a compositional bias: pro residues. The residue at position 2350 (S2350) is a Phosphoserine. A compositionally biased stretch (polar residues) spans 2410-2421 (QLNTPNRSALSS).

As to quaternary structure, part of a complex composed of MSX3, CREBBP/CBP AND EP300/p300; the interaction with MSX3 decreases histone acetylation activity. Interacts with DHX9 (via N-terminus); this interaction mediates association with RNA polymerase II holoenzyme and stimulates CREB-dependent transcriptional activation. Interacts (via transactivation domain and C-terminus) with PCNA; the interaction occurs on chromatin in UV-irradiated damaged cells. Found in a complex containing NCOA2; NCOA3; IKKA; IKKB and IKBKG. Probably part of a complex with HIF1A and EP300. The TAZ-type 1 domain interacts with HIF1A. Interacts with SRCAP, ELF3, MLLT7/FOXO4, N4BP2, NCOA6, PCAF, PELP1, PML, SMAD1, SMAD2, SMAD3, SPIB and TRERF1. Interacts with KLF1; the interaction results in acetylation and enhancement of transcriptional activity of KLF1. Interacts with MAFG; the interaction acetylates MAFG in the basic region and stimulates NFE2 transcriptional activity through increasing its DNA-binding activity. Interacts with IRF2; the interaction acetylates IRF2 and regulates its activity on the H4 promoter. Interacts with IRF3 (when phosphorylated); forming the dsRNA-activated factor 1 (DRAF1), a complex which activates the transcription of the type I interferon genes. Interacts (via N-terminus) with SS18L1/CREST (via C-terminus). Interacts with FOXO1; the interaction acetylates FOXO1 and inhibits its transcriptional activity. Interacts with MECOM and MTDH. Interacts with ASF1A and ASF1B; this promotes histone acetylation. Interacts with acetylated TP53/p53 and with the acetylated histones H3 and H4. Interacts with CITED1 (via C-terminus). Interacts with GATA1; the interaction results in acetylation and enhancement of transcriptional activity of GATA1. Interacts with MAF, CARM1. NCOA3, ZCCHC12, DDX17, DDX5 and CITED4 (C-terminal region). Interacts with phosphorylated CREB1. Interacts with DAXX; the interaction is dependent on CBP sumoylation and results in suppression of the transcriptional activity via recruitment of HDAC2 to DAXX. Interacts with NPAS2, CLOCK and BMAL1. Interacts with SMAD4; negatively regulated by ZBTB7A. Forms a complex with KMT2A and CREB1. Interacts with DDX3X; this interaction may facilitate HNF4A acetylation. Interacts with MSX1; the interaction may inhibit MSX1 autoinactivation. Interacts with MSX3. Interacts with ACSS2. Methylation of the KIX domain by CARM1 blocks association with CREB. This results in the blockade of CREB signaling, and in activation of apoptotic response. In terms of processing, phosphorylated by CHUK/IKKA at Ser-1383 and Ser-1387; these phosphorylations promote cell growth by switching the binding preference of CREBBP from TP53 to NF-kappa-B. Post-translationally, sumoylation negatively regulates transcriptional activity via the recruitment of DAAX. Autoacetylation is required for binding to protein substrates, such as acetylated histones and acetylated TP53/p53. Autoacetylation is induced by glucose and fatty acids.

The protein localises to the cytoplasm. It localises to the nucleus. The enzyme catalyses L-lysyl-[histone] + acetyl-CoA = N(6)-acetyl-L-lysyl-[histone] + CoA + H(+). It carries out the reaction L-lysyl-[protein] + acetyl-CoA = N(6)-acetyl-L-lysyl-[protein] + CoA + H(+). The catalysed reaction is (S)-lactoyl-CoA + L-lysyl-[protein] = N(6)-[(S)-lactoyl]-L-lysyl-[protein] + CoA + H(+). Its function is as follows. Acetylates histones, giving a specific tag for transcriptional activation. Mediates acetylation of histone H3 at 'Lys-18' and 'Lys-27' (H3K18ac and H3K27ac, respectively). Also acetylates non-histone proteins, like DDX21, FBL, IRF2, MAFG, NCOA3, POLR1E/PAF53 and FOXO1. Binds specifically to phosphorylated CREB and enhances its transcriptional activity toward cAMP-responsive genes. Acts as a coactivator of ALX1. Acts as a circadian transcriptional coactivator which enhances the activity of the circadian transcriptional activators: NPAS2-BMAL1 and CLOCK-BMAL1 heterodimers. Acetylates PCNA; acetylation promotes removal of chromatin-bound PCNA and its degradation during nucleotide excision repair (NER). Acetylates POLR1E/PAF53, leading to decreased association of RNA polymerase I with the rDNA promoter region and coding region. Acetylates DDX21, thereby inhibiting DDX21 helicase activity. Acetylates FBL, preventing methylation of 'Gln-105' of histone H2A (H2AQ104me). In addition to protein acetyltransferase, can use different acyl-CoA substrates, such as lactoyl-CoA, and is able to mediate protein lactylation. Catalyzes lactylation of MRE11 in response to DNA damage, thereby promoting DNA double-strand breaks (DSBs) via homologous recombination (HR). Functions as a transcriptional coactivator for SMAD4 in the TGF-beta signaling pathway. The protein is Histone lysine acetyltransferase CREBBP (Crebbp) of Mus musculus (Mouse).